The following is an 885-amino-acid chain: Translation initiation factor IF-2 (885 aa).

The segment at 1–295 (MTDNKDDKTI…EKFKRSQMQE (295 aa)) is disordered. Low complexity predominate over residues 63 to 77 (PVAAAPAAARPAEQR). The segment covering 78–94 (PMPPQPSGRPAPQPQPH) has biased composition (pro residues). Residues 130–183 (RDAEEAKRRAEEEVRRRREEEERIAREKEEAARRAAEEAARPAVEAEKVEEKVE) are compositionally biased toward basic and acidic residues. Over residues 184–201 (AATPAVAETRPLSERPAP) the composition is skewed to low complexity. The tr-type G domain maps to 383–550 (ARPPIVTIMG…AILLQSEILD (168 aa)). The segment at 392 to 399 (GHVDHGKT) is G1. Residue 392 to 399 (GHVDHGKT) participates in GTP binding. The interval 417-421 (GITQH) is G2. A G3 region spans residues 438 to 441 (DTPG). Residues 438-442 (DTPGH) and 492-495 (NKID) each bind GTP. The interval 492-495 (NKID) is G4. The segment at 528–530 (SAK) is G5.

It belongs to the TRAFAC class translation factor GTPase superfamily. Classic translation factor GTPase family. IF-2 subfamily.

It localises to the cytoplasm. In terms of biological role, one of the essential components for the initiation of protein synthesis. Protects formylmethionyl-tRNA from spontaneous hydrolysis and promotes its binding to the 30S ribosomal subunits. Also involved in the hydrolysis of GTP during the formation of the 70S ribosomal complex. In Sinorhizobium medicae (strain WSM419) (Ensifer medicae), this protein is Translation initiation factor IF-2.